An 87-amino-acid polypeptide reads, in one-letter code: Putative regulatory protein GK1166 (87 aa).

This sequence belongs to the RemA family.

The chain is Putative regulatory protein GK1166 from Geobacillus kaustophilus (strain HTA426).